The primary structure comprises 110 residues: Large ribosomal subunit protein uL22 (110 aa).

Belongs to the universal ribosomal protein uL22 family. Part of the 50S ribosomal subunit.

Its function is as follows. This protein binds specifically to 23S rRNA; its binding is stimulated by other ribosomal proteins, e.g. L4, L17, and L20. It is important during the early stages of 50S assembly. It makes multiple contacts with different domains of the 23S rRNA in the assembled 50S subunit and ribosome. In terms of biological role, the globular domain of the protein is located near the polypeptide exit tunnel on the outside of the subunit, while an extended beta-hairpin is found that lines the wall of the exit tunnel in the center of the 70S ribosome. The chain is Large ribosomal subunit protein uL22 from Marinomonas sp. (strain MWYL1).